The primary structure comprises 1392 residues: DNA-directed RNA polymerase subunit beta'' (1392 aa).

Residues cysteine 224, cysteine 295, cysteine 302, and cysteine 305 each contribute to the Zn(2+) site.

Belongs to the RNA polymerase beta' chain family. RpoC2 subfamily. In plastids the minimal PEP RNA polymerase catalytic core is composed of four subunits: alpha, beta, beta', and beta''. When a (nuclear-encoded) sigma factor is associated with the core the holoenzyme is formed, which can initiate transcription. The cofactor is Zn(2+).

It is found in the plastid. Its subcellular location is the chloroplast. It carries out the reaction RNA(n) + a ribonucleoside 5'-triphosphate = RNA(n+1) + diphosphate. Its function is as follows. DNA-dependent RNA polymerase catalyzes the transcription of DNA into RNA using the four ribonucleoside triphosphates as substrates. This is DNA-directed RNA polymerase subunit beta'' from Solanum lycopersicum (Tomato).